The chain runs to 273 residues: Ribosomal RNA small subunit methyltransferase A (273 aa).

The S-adenosyl-L-methionine site is built by Asn18, Leu20, Gly45, Glu66, Asp91, and Asn113.

It belongs to the class I-like SAM-binding methyltransferase superfamily. rRNA adenine N(6)-methyltransferase family. RsmA subfamily.

It is found in the cytoplasm. The enzyme catalyses adenosine(1518)/adenosine(1519) in 16S rRNA + 4 S-adenosyl-L-methionine = N(6)-dimethyladenosine(1518)/N(6)-dimethyladenosine(1519) in 16S rRNA + 4 S-adenosyl-L-homocysteine + 4 H(+). Functionally, specifically dimethylates two adjacent adenosines (A1518 and A1519) in the loop of a conserved hairpin near the 3'-end of 16S rRNA in the 30S particle. May play a critical role in biogenesis of 30S subunits. The chain is Ribosomal RNA small subunit methyltransferase A from Citrobacter koseri (strain ATCC BAA-895 / CDC 4225-83 / SGSC4696).